The sequence spans 281 residues: Nucleotide-binding protein CTN_0898 (281 aa).

Position 9 to 16 (9 to 16 (GLSGAGKT)) interacts with ATP. A GTP-binding site is contributed by 58–61 (DVRS).

The protein belongs to the RapZ-like family.

In terms of biological role, displays ATPase and GTPase activities. The protein is Nucleotide-binding protein CTN_0898 of Thermotoga neapolitana (strain ATCC 49049 / DSM 4359 / NBRC 107923 / NS-E).